The following is a 296-amino-acid chain: tRNA dimethylallyltransferase (296 aa).

G9–T16 lines the ATP pocket. Residue T11–T16 coordinates substrate. The segment at D34–Q37 is interaction with substrate tRNA.

It belongs to the IPP transferase family. Monomer. The cofactor is Mg(2+).

The catalysed reaction is adenosine(37) in tRNA + dimethylallyl diphosphate = N(6)-dimethylallyladenosine(37) in tRNA + diphosphate. Its function is as follows. Catalyzes the transfer of a dimethylallyl group onto the adenine at position 37 in tRNAs that read codons beginning with uridine, leading to the formation of N6-(dimethylallyl)adenosine (i(6)A). In Chloroflexus aurantiacus (strain ATCC 29366 / DSM 635 / J-10-fl), this protein is tRNA dimethylallyltransferase.